The following is a 625-amino-acid chain: Chaperone protein HtpG (625 aa).

The tract at residues 1 to 341 (MERKEFKAES…SEDLSLNISR (341 aa)) is a; substrate-binding. The interval 342–551 (EMLQHDRQLK…EGEVSIEMEK (210 aa)) is b. Residues 552 to 625 (VLRAMPDNQN…FSNDICKVMA (74 aa)) form a c region.

The protein belongs to the heat shock protein 90 family. As to quaternary structure, homodimer.

The protein localises to the cytoplasm. In terms of biological role, molecular chaperone. Has ATPase activity. In Halalkalibacterium halodurans (strain ATCC BAA-125 / DSM 18197 / FERM 7344 / JCM 9153 / C-125) (Bacillus halodurans), this protein is Chaperone protein HtpG.